A 132-amino-acid polypeptide reads, in one-letter code: Transcription antitermination protein NusB (132 aa).

The protein belongs to the NusB family.

In terms of biological role, involved in transcription antitermination. Required for transcription of ribosomal RNA (rRNA) genes. Binds specifically to the boxA antiterminator sequence of the ribosomal RNA (rrn) operons. This is Transcription antitermination protein NusB from Campylobacter jejuni subsp. jejuni serotype O:6 (strain 81116 / NCTC 11828).